Here is a 406-residue protein sequence, read N- to C-terminus: Succinylornithine transaminase (406 aa).

An N6-(pyridoxal phosphate)lysine modification is found at Lys-252.

Belongs to the class-III pyridoxal-phosphate-dependent aminotransferase family. AstC subfamily. Requires pyridoxal 5'-phosphate as cofactor.

The enzyme catalyses N(2)-succinyl-L-ornithine + 2-oxoglutarate = N-succinyl-L-glutamate 5-semialdehyde + L-glutamate. It participates in amino-acid degradation; L-arginine degradation via AST pathway; L-glutamate and succinate from L-arginine: step 3/5. Functionally, catalyzes the transamination of N(2)-succinylornithine and alpha-ketoglutarate into N(2)-succinylglutamate semialdehyde and glutamate. Can also act as an acetylornithine aminotransferase. The chain is Succinylornithine transaminase from Escherichia coli O17:K52:H18 (strain UMN026 / ExPEC).